The following is a 173-amino-acid chain: Large ribosomal subunit protein uL10 (173 aa).

It belongs to the universal ribosomal protein uL10 family. As to quaternary structure, part of the ribosomal stalk of the 50S ribosomal subunit. The N-terminus interacts with L11 and the large rRNA to form the base of the stalk. The C-terminus forms an elongated spine to which L12 dimers bind in a sequential fashion forming a multimeric L10(L12)X complex.

Its function is as follows. Forms part of the ribosomal stalk, playing a central role in the interaction of the ribosome with GTP-bound translation factors. This Chlorobaculum tepidum (strain ATCC 49652 / DSM 12025 / NBRC 103806 / TLS) (Chlorobium tepidum) protein is Large ribosomal subunit protein uL10.